The chain runs to 1919 residues: Protein TIC 214 (1919 aa).

The next 6 helical transmembrane spans lie at Ile-18 to Gly-38, Phe-67 to Leu-87, Pro-90 to His-110, Leu-127 to Leu-147, Val-175 to Ile-195, and Ile-224 to Ile-244. 3 disordered regions span residues Lys-250–Lys-375, Ile-1107–Ser-1129, and Glu-1606–Val-1636. Composition is skewed to acidic residues over residues Gly-259–Ile-269, Gly-278–Ile-288, Gly-297–Ile-307, Gly-316–Thr-328, and Glu-355–Glu-366. Positions Ile-1107 to Gly-1117 are enriched in basic residues. Residues Glu-1606 to Leu-1623 are compositionally biased toward basic and acidic residues. Positions Asp-1626–Val-1636 are enriched in polar residues.

The protein belongs to the TIC214 family. As to quaternary structure, part of the Tic complex.

It localises to the plastid. Its subcellular location is the chloroplast inner membrane. Functionally, involved in protein precursor import into chloroplasts. May be part of an intermediate translocation complex acting as a protein-conducting channel at the inner envelope. The protein is Protein TIC 214 of Panax ginseng (Korean ginseng).